The primary structure comprises 480 residues: M-phase inducer phosphatase cdc-25.2 (480 aa).

Over residues 1-20 (MNRPSQISQDVAQPLSNQHE) the composition is skewed to polar residues. The disordered stretch occupies residues 1-35 (MNRPSQISQDVAQPLSNQHETAMMSSDEDSMSRDS). The 107-residue stretch at 243–349 (FDDKYILIDC…FFFAANEANI (107 aa)) folds into the Rhodanese domain. The segment at 411–452 (TSAPSTSTENIDTNDDCQKSRTPAVPRIASRRNLFSDPSHSP) is disordered.

This sequence belongs to the MPI phosphatase family.

The enzyme catalyses O-phospho-L-tyrosyl-[protein] + H2O = L-tyrosyl-[protein] + phosphate. In terms of biological role, required for intestinal cell division following the 16E cell stage of embryogenesis. Regulates intestinal cell divisions and binucleations probably by modulating the activity of the cell cycle regulator wee-1.3 and by activating the cdk-1/cyb-1 complex. Plays a role in male tail development, via regulation of the cell divisions of the ray precursor cell lineages, perhaps acting together with cell cycle regulators cyl-1, cdk-1, cyb-3, and cyd-1. This Caenorhabditis elegans protein is M-phase inducer phosphatase cdc-25.2.